We begin with the raw amino-acid sequence, 280 residues long: Urease accessory protein UreD (280 aa).

This sequence belongs to the UreD family. UreD, UreF and UreG form a complex that acts as a GTP-hydrolysis-dependent molecular chaperone, activating the urease apoprotein by helping to assemble the nickel containing metallocenter of UreC. The UreE protein probably delivers the nickel.

The protein localises to the cytoplasm. Required for maturation of urease via the functional incorporation of the urease nickel metallocenter. This chain is Urease accessory protein UreD, found in Pseudomonas aeruginosa (strain ATCC 15692 / DSM 22644 / CIP 104116 / JCM 14847 / LMG 12228 / 1C / PRS 101 / PAO1).